The sequence spans 379 residues: Queuine tRNA-ribosyltransferase (379 aa).

Catalysis depends on D94, which acts as the Proton acceptor. Residues 94 to 98, D148, Q191, and G218 each bind substrate; that span reads DSGGF. The tract at residues 249–255 is RNA binding; it reads GVGSPDA. D268 functions as the Nucleophile in the catalytic mechanism. The RNA binding; important for wobble base 34 recognition stretch occupies residues 273–277; it reads TRIAR. Positions 306, 308, 311, and 337 each coordinate Zn(2+).

Belongs to the queuine tRNA-ribosyltransferase family. As to quaternary structure, homodimer. Within each dimer, one monomer is responsible for RNA recognition and catalysis, while the other monomer binds to the replacement base PreQ1. Requires Zn(2+) as cofactor.

The catalysed reaction is 7-aminomethyl-7-carbaguanine + guanosine(34) in tRNA = 7-aminomethyl-7-carbaguanosine(34) in tRNA + guanine. Its pathway is tRNA modification; tRNA-queuosine biosynthesis. Functionally, catalyzes the base-exchange of a guanine (G) residue with the queuine precursor 7-aminomethyl-7-deazaguanine (PreQ1) at position 34 (anticodon wobble position) in tRNAs with GU(N) anticodons (tRNA-Asp, -Asn, -His and -Tyr). Catalysis occurs through a double-displacement mechanism. The nucleophile active site attacks the C1' of nucleotide 34 to detach the guanine base from the RNA, forming a covalent enzyme-RNA intermediate. The proton acceptor active site deprotonates the incoming PreQ1, allowing a nucleophilic attack on the C1' of the ribose to form the product. After dissociation, two additional enzymatic reactions on the tRNA convert PreQ1 to queuine (Q), resulting in the hypermodified nucleoside queuosine (7-(((4,5-cis-dihydroxy-2-cyclopenten-1-yl)amino)methyl)-7-deazaguanosine). This is Queuine tRNA-ribosyltransferase from Staphylococcus haemolyticus (strain JCSC1435).